Consider the following 147-residue polypeptide: DLLSEYGYDLMDTVDEYIPTPERDERKPFMMPIEDVFTITGRGTVASGRIERGVIKLGDEVEIVGLVEDVLKTTVTGIEMFRKTLDEGQAGDNIGALLRGVNREQVVRGQVLAAPGSVQTHEKFSAEVYIMSKEEGGRHTPFFSNYR.

It belongs to the GTP-binding elongation factor family. EF-Tu/EF-1A subfamily. Monomer.

It localises to the cytoplasm. In terms of biological role, this protein promotes the GTP-dependent binding of aminoacyl-tRNA to the A-site of ribosomes during protein biosynthesis. In Fructilactobacillus sanfranciscensis (Lactobacillus sanfranciscensis), this protein is Elongation factor Tu (tuf).